A 447-amino-acid chain; its full sequence is 1-aminocyclopropane-1-carboxylate synthase 7 (447 aa).

Substrate-binding residues include E61 and Y100. K285 carries the N6-(pyridoxal phosphate)lysine modification.

The protein belongs to the class-I pyridoxal-phosphate-dependent aminotransferase family. In terms of assembly, homodimer and heterodimer. In vivo, the relevance of heterodimerization with other ACS enzymes is however unsure. Interacts with XBAT32. It depends on pyridoxal 5'-phosphate as a cofactor. In terms of processing, ubiquitinated by XBAT32. Ubiquitination probably leads to its subsequent degradation, thus controlling ethylene production. Expressed in roots.

It catalyses the reaction S-adenosyl-L-methionine = 1-aminocyclopropane-1-carboxylate + S-methyl-5'-thioadenosine + H(+). It functions in the pathway alkene biosynthesis; ethylene biosynthesis via S-adenosyl-L-methionine; ethylene from S-adenosyl-L-methionine: step 1/2. 1-aminocyclopropane-1-carboxylate synthase (ACS) enzymes catalyze the conversion of S-adenosyl-L-methionine (SAM) into 1-aminocyclopropane-1-carboxylate (ACC), a direct precursor of ethylene. The protein is 1-aminocyclopropane-1-carboxylate synthase 7 (ACS7) of Arabidopsis thaliana (Mouse-ear cress).